The following is a 207-amino-acid chain: LexA repressor (207 aa).

Positions 28–48 form a DNA-binding region, H-T-H motif; that stretch reads RAEIAQKLGFKSANAAEEHLK. Active-site for autocatalytic cleavage activity residues include Ser124 and Lys161.

It belongs to the peptidase S24 family. In terms of assembly, homodimer.

The catalysed reaction is Hydrolysis of Ala-|-Gly bond in repressor LexA.. Represses a number of genes involved in the response to DNA damage (SOS response), including recA and lexA. In the presence of single-stranded DNA, RecA interacts with LexA causing an autocatalytic cleavage which disrupts the DNA-binding part of LexA, leading to derepression of the SOS regulon and eventually DNA repair. This Aeromonas hydrophila subsp. hydrophila (strain ATCC 7966 / DSM 30187 / BCRC 13018 / CCUG 14551 / JCM 1027 / KCTC 2358 / NCIMB 9240 / NCTC 8049) protein is LexA repressor.